A 218-amino-acid chain; its full sequence is Adenylate kinase (218 aa).

10–15 (GAGKGT) is an ATP binding site. Residues 30–59 (STGDMLRAAVKAGTPLGVEAKKIMDAGALV) form an NMP region. AMP-binding positions include Thr-31, Arg-36, 57 to 59 (ALV), 85 to 88 (GFPR), and Gln-92. An LID region spans residues 122–159 (GRRSHTASGRTYHVKYNPPKVEGKDDVTGEPLIQREDD). ATP contacts are provided by residues Arg-123 and 132–133 (TY). 2 residues coordinate AMP: Arg-156 and Arg-167. Residue Gly-203 coordinates ATP.

The protein belongs to the adenylate kinase family. In terms of assembly, monomer.

It localises to the cytoplasm. The enzyme catalyses AMP + ATP = 2 ADP. It participates in purine metabolism; AMP biosynthesis via salvage pathway; AMP from ADP: step 1/1. Its function is as follows. Catalyzes the reversible transfer of the terminal phosphate group between ATP and AMP. Plays an important role in cellular energy homeostasis and in adenine nucleotide metabolism. The chain is Adenylate kinase from Polaromonas sp. (strain JS666 / ATCC BAA-500).